We begin with the raw amino-acid sequence, 382 residues long: MNPSESNVKPPLWLLAELTYRCPLQCPYCSNPLDFAQQEKELSTAQWIEVFKQARAMGAVQIGFSGGEPLVRKDLPELIRSARELGFYTNLITSGIGLTQKKIDAFAEAGLDHIQISFQASDETLNAALAGSQKAFQQKLEMARAVKAHGYPMVLNFVLHRHNIDQLDRIIELCIELEADDVELATCQFYGWAQLNREGLLPTRDQLVRAEAVVHRYREKMAASGNLANLLFVTPDYYEERPKGCMGGWGAIFLSVTPEGMALPCHSARQLPIRFPSVLEHSLQDIWFNSFGFNRYRGFDWMPEPCRSCDEKEKDFGGCRCQAFMLTGNADNADPVCSKSEHHGTILAAREQANCTNIQVNQLRFRNRANSERVNSQLIFKG.

The region spanning 8-223 is the Radical SAM core domain; that stretch reads VKPPLWLLAE…VHRYREKMAA (216 aa). Cysteine 22, cysteine 26, and cysteine 29 together coordinate [4Fe-4S] cluster.

It belongs to the radical SAM superfamily. PqqE family. Interacts with PqqD. The interaction is necessary for activity of PqqE. Requires [4Fe-4S] cluster as cofactor.

It carries out the reaction [PQQ precursor protein] + S-adenosyl-L-methionine = E-Y cross-linked-[PQQ precursor protein] + 5'-deoxyadenosine + L-methionine + H(+). The protein operates within cofactor biosynthesis; pyrroloquinoline quinone biosynthesis. Its function is as follows. Catalyzes the cross-linking of a glutamate residue and a tyrosine residue in the PqqA protein as part of the biosynthesis of pyrroloquinoline quinone (PQQ). The sequence is that of PqqA peptide cyclase from Erwinia tasmaniensis (strain DSM 17950 / CFBP 7177 / CIP 109463 / NCPPB 4357 / Et1/99).